Here is a 264-residue protein sequence, read N- to C-terminus: Glutamate racemase (264 aa).

Residues 10–11 (DS) and 42–43 (YG) contribute to the substrate site. The active-site Proton donor/acceptor is the Cys-73. 74 to 75 (NT) serves as a coordination point for substrate. Cys-183 functions as the Proton donor/acceptor in the catalytic mechanism. 184 to 185 (TH) provides a ligand contact to substrate.

It belongs to the aspartate/glutamate racemases family.

The enzyme catalyses L-glutamate = D-glutamate. It participates in cell wall biogenesis; peptidoglycan biosynthesis. Provides the (R)-glutamate required for cell wall biosynthesis. This is Glutamate racemase from Streptococcus uberis (strain ATCC BAA-854 / 0140J).